Consider the following 341-residue polypeptide: Paired box protein Pax-9 (341 aa).

Residues 4–130 (AFGEVNQLGG…SSISRILRNK (127 aa)) constitute a DNA-binding region (paired). A PAI subdomain region spans residues 7–63 (EVNQLGGVFVNGRPLPNAIRLRIVELAQLGIRPCDISRQLRVSHGCVSKILARYNET). The RED subdomain stretch occupies residues 82–130 (TVVKHIRTYKQRDPGIFAWEIRDRLLADGVCDKYNVPSVSSISRILRNK). The interval 168-189 (AAAAKVPTPPGVPAIPGSVAMP) is interaction with KDM5B.

Interacts with KDM5B.

The protein localises to the nucleus. Transcription factor required for normal development of thymus, parathyroid glands, ultimobranchial bodies, teeth, skeletal elements of skull and larynx as well as distal limbs. The protein is Paired box protein Pax-9 (PAX9) of Callimico goeldii (Goeldi's marmoset).